The chain runs to 298 residues: Glycine--tRNA ligase alpha subunit (298 aa).

It belongs to the class-II aminoacyl-tRNA synthetase family. Tetramer of two alpha and two beta subunits.

The protein resides in the cytoplasm. The catalysed reaction is tRNA(Gly) + glycine + ATP = glycyl-tRNA(Gly) + AMP + diphosphate. This is Glycine--tRNA ligase alpha subunit from Gloeothece citriformis (strain PCC 7424) (Cyanothece sp. (strain PCC 7424)).